Here is a 597-residue protein sequence, read N- to C-terminus: Probable tyrosine-protein phosphatase (597 aa).

Positions 55–81 are enriched in low complexity; the sequence is VSSSSDAAPTSISTTTTSTTSMTDASA. 3 disordered regions span residues 55-89, 107-172, and 188-228; these read VSSS…QQVY, SFSI…PNSL, and STNG…GNNN. Residues 107–126 are compositionally biased toward polar residues; it reads SFSIQPNQTPTMLPTSSYTL. Positions 136–151 are enriched in low complexity; sequence TSSISSISSTSSNSTS. Composition is skewed to polar residues over residues 188–206 and 216–228; these read STNG…NQPR and KKST…GNNN. The region spanning 428–579 is the Tyrosine-protein phosphatase domain; it reads GPKNVLNNLI…LMEFGDKLNN (152 aa). Cysteine 516 acts as the Phosphocysteine intermediate in catalysis.

It belongs to the protein-tyrosine phosphatase family. Non-receptor class dual specificity subfamily.

The enzyme catalyses O-phospho-L-tyrosyl-[protein] + H2O = L-tyrosyl-[protein] + phosphate. The polypeptide is Probable tyrosine-protein phosphatase (CPP1) (Candida albicans (strain WO-1) (Yeast)).